Here is a 337-residue protein sequence, read N- to C-terminus: ATP-dependent 6-phosphofructokinase (337 aa).

Glycine 11 serves as a coordination point for ATP. 21 to 25 serves as a coordination point for ADP; that stretch reads RAVVR. Residues 72 to 73 and 102 to 105 contribute to the ATP site; these read RY and GDGS. Aspartate 103 lines the Mg(2+) pocket. 125–127 is a substrate binding site; that stretch reads TID. Aspartate 127 functions as the Proton acceptor in the catalytic mechanism. Arginine 154 is a binding site for ADP. Substrate is bound by residues arginine 162 and 169–171; that span reads MGR. Residues 185 to 187, arginine 212, and 214 to 216 each bind ADP; these read GAD and KNH. Substrate contacts are provided by residues glutamate 223, arginine 245, and 251-254; that span reads HILR.

This sequence belongs to the phosphofructokinase type A (PFKA) family. ATP-dependent PFK group I subfamily. Prokaryotic clade 'B1' sub-subfamily. As to quaternary structure, homotetramer. It depends on Mg(2+) as a cofactor.

The protein localises to the cytoplasm. It catalyses the reaction beta-D-fructose 6-phosphate + ATP = beta-D-fructose 1,6-bisphosphate + ADP + H(+). It functions in the pathway carbohydrate degradation; glycolysis; D-glyceraldehyde 3-phosphate and glycerone phosphate from D-glucose: step 3/4. With respect to regulation, allosterically activated by ADP and other diphosphonucleosides, and allosterically inhibited by phosphoenolpyruvate. Catalyzes the phosphorylation of D-fructose 6-phosphate to fructose 1,6-bisphosphate by ATP, the first committing step of glycolysis. The chain is ATP-dependent 6-phosphofructokinase from Streptococcus equi subsp. zooepidemicus (strain H70).